The chain runs to 874 residues: UPF0182 protein Sfum_2137 (874 aa).

Helical transmembrane passes span 7–27, 57–77, 110–130, 171–191, 208–228, 252–272, and 283–303; these read WPLI…LSSL, IVFG…FWVA, SLWV…LPIF, RRLL…YLLE, LHLS…YVLQ, VIWA…FSMI, and PLVV…SAFL.

This sequence belongs to the UPF0182 family.

It is found in the cell membrane. The chain is UPF0182 protein Sfum_2137 from Syntrophobacter fumaroxidans (strain DSM 10017 / MPOB).